Here is a 325-residue protein sequence, read N- to C-terminus: Neural proliferation differentiation and control protein 1 (325 aa).

The N-terminal stretch at 1–34 (MATPLPPPSPRHLRLLRLLLSGLVLGAALRGAAA) is a signal peptide. The tract at residues 138 to 175 (QGLELGLPSTPGTPTPTPHTSLGSPVSSDPVHMSPLEP) is disordered. Residues 182-202 (GLALVLILAFCVAGAAALSVA) form a helical membrane-spanning segment. Phosphoserine is present on S229. Residues 266-290 (EPPKELDTASSDEENEDGDFTVYEC) form a disordered region. Over residues 275–284 (SSDEENEDGD) the composition is skewed to acidic residues.

Belongs to the NPDC1/cab-1 family. In terms of tissue distribution, strongly expressed in adult brain; especially in hippocampus, frontal lobe and temporal lobe.

Its subcellular location is the membrane. In terms of biological role, suppresses oncogenic transformation in neural and non-neural cells and down-regulates neural cell proliferation. Might be involved in transcriptional regulation. The chain is Neural proliferation differentiation and control protein 1 (NPDC1) from Homo sapiens (Human).